Consider the following 1375-residue polypeptide: Protein lingerer (1375 aa).

The interval 1-69 (MSTQTRSGGG…KAQPKATTEQ (69 aa)) is disordered. Residues 53–62 (SKTDKPEKAQ) show a composition bias toward basic and acidic residues. Residues 84 to 124 (QINEKVLLLLTMTQRSEEEVCCALNECDYDLEAAANFLIEE) form the UBA domain. Low complexity-rich tracts occupy residues 142 to 161 (ANNT…GNGN) and 173 to 184 (SNRGGTRGSSDS). The tract at residues 142-286 (ANNTADGAAG…GSGRGGNANE (145 aa)) is disordered. Residues 185-204 (RGWRGRETRENERNQRESRE) show a composition bias toward basic and acidic residues. Residues 228 to 282 (RNGGGRSGPGGGGRGGGFVSRSGRGGGRMGGRTGGPRGDRGSGGPGGAYGSGRGG) are compositionally biased toward gly residues. Position 321 is a phosphotyrosine (Tyr321). At Ser324 the chain carries Phosphoserine. Composition is skewed to polar residues over residues 374 to 387 (VQQG…SSSG) and 395 to 412 (ATLS…SAAV). Disordered stretches follow at residues 374–453 (VQQG…ASPD) and 613–646 (FEPL…QQQQ). Positions 426–441 (SGAGTGASAAAGGGAG) are enriched in gly residues. Composition is skewed to low complexity over residues 442-453 (STPSSFVSASPD) and 629-646 (QQQQ…QQQQ). A Phosphoserine modification is found at Ser672. Thr673 carries the phosphothreonine modification. Ser674 bears the Phosphoserine mark. Low complexity predominate over residues 750-767 (QGYGSYQPSSYQQQAGSG). 5 disordered regions span residues 750–801 (QGYG…SGNA), 869–894 (SVST…GQTG), 987–1036 (KNTS…GGSG), 1203–1234 (SKGG…DLTS), and 1251–1277 (EKQS…TSAQ). A compositionally biased stretch (gly residues) spans 768-781 (AQSGTGAVSGGGGT). Composition is skewed to low complexity over residues 789–801 (GGSS…SGNA), 869–882 (SVST…NSGS), and 987–1008 (KNTS…TGNA). Positions 1009–1036 (SGQGAGASTGGVGSSSGAGGAGSGGGSG) are enriched in gly residues. The segment covering 1265-1277 (MPNTQTAGGTSAQ) has biased composition (polar residues).

As to expression, at stage 11, expression is restricted to the neuroblasts, predominant in the central nervous system (CNS), including the brain and ventral nerve cord, and in the PNS. Later embryonic expression is seen in the gonads. Late third instar larvae show expression in the CNS, imaginal disks (including genital, eye-antennal, leg, wing and haltere disks), and gonads. In the larval brain, it is expressed in all of the glial cells and in clusters of neurons that projected contralaterally. In the larval ventral ganglion, it is expressed in subperineurial glia, peripheral exit glia, and a number of interneurons, but not in motor neurons. Isoform B is abundantly expressed in males and females. Isoform D is male specific and expressed at low levels.

The protein localises to the cytoplasm. In terms of biological role, acts in the nervous system to mediate the control of copulatory organs during courtship. This is Protein lingerer from Drosophila melanogaster (Fruit fly).